A 2253-amino-acid polypeptide reads, in one-letter code: MRPGPALLLLGVGLSLSVGRLPLPPVPRGAQAAVSGAPGGLLRGAPGLGVRGGRALLSLRPSAVRAGGAVLSGRGSLCFPHGGTGRRWYCLDLRVLLSAQRLPWPAAPALALVDLQLSARGGRLSLTWSVRLPRSPGRLAWAFRLRLLGPGAARPASPAARVSPRSAAPGPRPQQGFVARTECPTDGPARVMLQAVNSSSHRAVESSVSCQINACVIQRVRINTDQKGAPVRLSMQAEATINASVQLDCPAARAIAQYWQVFSVPAVGQAPDWTQPLDLPQLEIRNSPLFIHIPNNSLQWGVYVFNFTVSITTGNPKMPEVKDSDAVYVWIVRSSLQAVMLGDANITANFTEQLILDGSTSSDPDADSPLQGLQFFWYCTTDPRNYGGDRIILGSKEVCHPEQANLKWPWASGPVLTLLPETLKGDHVYFFRMVIRKDSRTAFSDKRVHVLQGPKAIAHITCIENCERNFIVSDRFSLFLNCTNCASRDFYKWSILSSSGGEMLFDWMGETVTGRNGAYLSIKAFAFRHFLEAEFSISLYLACWSGVTSVFRHSFIINHGPQIGECKINPAKGIALITKFVVQCSNFRDKHVPLTYKIIVSDLHSVGEISSVKENTLGTILYLGPQSTVPPSFLPVGMLASQYGLKIYAQVYDSLGAFSQVTLHATAQAPTDKNSSKTVLNQLLSFTVGPSSLLSTLIQKKDFLPAGYLLYIVASVLNNMKTELPLRDDRVNLRKHLIDQSFLLPVSTLVEIGQVVMTITKLTQKPSEFTWDAQKRATMRVWQANQALQEYQQKDKRFRSEQIEIVSTGILMSLSNILKMTSPHQVVKDPFYVIESLSDTILANKVPGNKTTSMRTPNFNMYVKKVEKWGINQLFRNEKHCRNCFYPTLNVSSVPGLSANGPISTMFCDFTNDLFPWLNDQENTSVEVSGFRMTGVADNGSVLEITPDVAEVYLVRKNLTFAAFNLTVGPNSEVDGSLKKTTGGFSFQVDSTVLREVLVHIVTEVMVLFTVLVYTGSQITPTALVATFLVPHDIPPFASQSALFDPACTVKKARVVCLPVSLLQLIAQHSHSPHCTVSIVLQAPRFVMKLNDKLVRISIFSVQCLDMYGIQSEWREGYCILGEKTSWYEVHCICKNVVRARRQLGTIGLTGIHLHTHYVMAKVIVIPNPVDLRLNIIKSLHQNPVTLFTVLFIILLYVGLAFWALYRDEMDQHLRGHVIVLPDNDPYDNLCYLVTIFTGSRWGSGTRANVFVQLRGTVSTSDVHCLSHPHFTTLYRGSINTFLLTTKSDLGDIHSIRVWHNNEGRSPSWYLSRIKVENLFSRHIWLFICQKWLSVDTTLDRTFHVTHPDERLTRKDFFFIDVSSNLRKNHMWFSIFASVVAKTFNRLQRLSCCLAMLLSSLLCNIMFFNLNRQEQTESRERKYMRSMMIGIESVLITIPVQLLITFLFTCSQRKPQADLKEVSPQKHPLMSEASEHWEEYLRKWHAYETAKVHPREVAKPASKGKPRLPKASPKATSKPKHRHRKAQIKTPETLGPNTNSNNNIEDDQDVHSEQHPSQKDLQQLKKKPRIVLPWWCVYVAWFLVFATSSISSFFIVFYGLTYGYDKSIEWLFASFCSFCQSVLLVQPSKIILLSGFRTNKPKYCKNLSWSTKYKYTEIRLDGMRMHPEEMQRIHDQIVRIRGTRMYQPLTEDEIRIFKRKKRIKRRALLFLSYILTHFIFLALLLILIVLLRHTDCFYYNQFIRDRFSMDLATVTKLEDIYRWLNSVLLPLLHNDLNPTFLPESSSKILGLPLMRQVRAKSSEKMCLPAEKFVQNSIRREIHCHPKYGIDPEDTKNYSGFWNEVDKQAIDESTNGFTYKPQGTQWLYYSYGLLHTYGSGGYALYFFPEQQRFNSTLRLKELQESNWLDEKTWAVVLELTTFNPDINLFCSISVIFEVSQLGVVNTSISLHSFSLADFDRKASAEIYLYVAILIFFLAYVVDEGCIIMQERASYVRSVYNLLNFALKCIFTVLIVLFLRKHFLATGIIRFYLSNPEDFIPFHAVSQVDHIMRIILGFLLFLTILKTLRYSRFFYDVRLAQRAIQAALPGICHMAFVVSVYFFVYMAFGYLVFGQHEWNYSNLIHSTQTVFSYCVSAFQNTEFSNNRILGVLFLSSFMLVMICVLINLFQAVILSAYEEMKQPVYEEPSDEVEAMTYLCRKLRTMFSFLTSQSKAKDEPEFFIDMLYGQPEKNSHRYLGLKTRNINGKKMVYLVV.

The first 19 residues, 1–19, serve as a signal peptide directing secretion; it reads MRPGPALLLLGVGLSLSVG. Over 20 to 1184 the chain is Extracellular; sequence RLPLPPVPRG…NIIKSLHQNP (1165 aa). Residues 154–169 show a composition bias toward low complexity; the sequence is RPASPAARVSPRSAAP. The tract at residues 154-177 is disordered; it reads RPASPAARVSPRSAAPGPRPQQGF. 14 N-linked (GlcNAc...) asparagine glycosylation sites follow: asparagine 197, asparagine 242, asparagine 295, asparagine 306, asparagine 345, asparagine 349, asparagine 481, asparagine 674, asparagine 849, asparagine 890, asparagine 923, asparagine 939, asparagine 958, and asparagine 965. An REJ domain is found at 215 to 913; the sequence is CVIQRVRINT…STMFCDFTND (699 aa). Residues 1185–1205 form a helical membrane-spanning segment; it reads VTLFTVLFIILLYVGLAFWAL. At 1206–1389 the chain is on the cytoplasmic side; that stretch reads YRDEMDQHLR…VAKTFNRLQR (184 aa). The PLAT domain maps to 1230–1347; sequence LCYLVTIFTG…TLDRTFHVTH (118 aa). The helical transmembrane segment at 1390–1410 threads the bilayer; the sequence is LSCCLAMLLSSLLCNIMFFNL. Over 1411 to 1427 the chain is Extracellular; that stretch reads NRQEQTESRERKYMRSM. The chain crosses the membrane as a helical span at residues 1428–1448; it reads MIGIESVLITIPVQLLITFLF. Topologically, residues 1449-1576 are cytoplasmic; the sequence is TCSQRKPQAD…KPRIVLPWWC (128 aa). A disordered region spans residues 1494 to 1562; sequence PREVAKPASK…EQHPSQKDLQ (69 aa). Over residues 1517-1527 the composition is skewed to basic residues; sequence SKPKHRHRKAQ. A compositionally biased stretch (basic and acidic residues) spans 1549–1558; it reads DVHSEQHPSQ. A helical membrane pass occupies residues 1577–1597; that stretch reads VYVAWFLVFATSSISSFFIVF. At 1598–1607 the chain is on the extracellular side; that stretch reads YGLTYGYDKS. The chain crosses the membrane as a helical span at residues 1608–1628; the sequence is IEWLFASFCSFCQSVLLVQPS. At 1629–1708 the chain is on the cytoplasmic side; sequence KIILLSGFRT…RKKRIKRRAL (80 aa). Residues 1709-1729 traverse the membrane as a helical segment; it reads LFLSYILTHFIFLALLLILIV. The Extracellular portion of the chain corresponds to 1730–1966; it reads LLRHTDCFYY…FDRKASAEIY (237 aa). N-linked (GlcNAc...) asparagine glycans are attached at residues asparagine 1836, asparagine 1893, and asparagine 1944. Residues 1967–1987 form a helical membrane-spanning segment; that stretch reads LYVAILIFFLAYVVDEGCIIM. Residues 1988–1996 are Cytoplasmic-facing; sequence QERASYVRS. The helical transmembrane segment at 1997–2017 threads the bilayer; sequence VYNLLNFALKCIFTVLIVLFL. Residues 2018–2042 lie on the Extracellular side of the membrane; it reads RKHFLATGIIRFYLSNPEDFIPFHA. The chain crosses the membrane as a helical span at residues 2043-2063; sequence VSQVDHIMRIILGFLLFLTIL. Topologically, residues 2064-2091 are cytoplasmic; it reads KTLRYSRFFYDVRLAQRAIQAALPGICH. Residues 2092–2112 form a helical membrane-spanning segment; the sequence is MAFVVSVYFFVYMAFGYLVFG. At 2113–2145 the chain is on the extracellular side; that stretch reads QHEWNYSNLIHSTQTVFSYCVSAFQNTEFSNNR. A helical transmembrane segment spans residues 2146 to 2166; sequence ILGVLFLSSFMLVMICVLINL. Over 2167–2253 the chain is Cytoplasmic; sequence FQAVILSAYE…NGKKMVYLVV (87 aa).

It belongs to the polycystin family. In terms of tissue distribution, exclusively expressed in testis.

The protein localises to the cell membrane. It is found in the cytoplasmic vesicle. The protein resides in the secretory vesicle. Its subcellular location is the acrosome membrane. It localises to the nucleus. In terms of biological role, testis-specific protein that controls sperm transport and the timing of zona pellucida-evoked exocytosis of the sperm acrosome. This chain is Polycystin family receptor for egg jelly, found in Homo sapiens (Human).